Here is an 87-residue protein sequence, read N- to C-terminus: Small ribosomal subunit protein eS21 (87 aa).

Belongs to the eukaryotic ribosomal protein eS21 family. In terms of assembly, component of the small ribosomal subunit. Mature ribosomes consist of a small (40S) and a large (60S) subunit. The 40S subunit contains about 33 different proteins and 1 molecule of RNA (18S). The 60S subunit contains about 49 different proteins and 3 molecules of RNA (25S, 5.8S and 5S).

The protein localises to the cytoplasm. Required for the processing of the 20S rRNA-precursor to mature 18S rRNA in a late step of the maturation of 40S ribosomal subunits. Has a physiological role leading to 18S rRNA stability. This is Small ribosomal subunit protein eS21 (RPS21) from Eremothecium gossypii (strain ATCC 10895 / CBS 109.51 / FGSC 9923 / NRRL Y-1056) (Yeast).